The sequence spans 419 residues: Gamma-glutamyl phosphate reductase (419 aa).

The protein belongs to the gamma-glutamyl phosphate reductase family.

It is found in the cytoplasm. The enzyme catalyses L-glutamate 5-semialdehyde + phosphate + NADP(+) = L-glutamyl 5-phosphate + NADPH + H(+). It participates in amino-acid biosynthesis; L-proline biosynthesis; L-glutamate 5-semialdehyde from L-glutamate: step 2/2. Catalyzes the NADPH-dependent reduction of L-glutamate 5-phosphate into L-glutamate 5-semialdehyde and phosphate. The product spontaneously undergoes cyclization to form 1-pyrroline-5-carboxylate. This is Gamma-glutamyl phosphate reductase from Oleidesulfovibrio alaskensis (strain ATCC BAA-1058 / DSM 17464 / G20) (Desulfovibrio alaskensis).